Consider the following 167-residue polypeptide: 6,7-dimethyl-8-ribityllumazine synthase (167 aa).

5-amino-6-(D-ribitylamino)uracil contacts are provided by residues Phe-26, 60–62 (AFE), and 89–91 (AVI). 94–95 (ET) contributes to the (2S)-2-hydroxy-3-oxobutyl phosphate binding site. His-97 acts as the Proton donor in catalysis. Phe-122 contacts 5-amino-6-(D-ribitylamino)uracil. Residue Arg-136 participates in (2S)-2-hydroxy-3-oxobutyl phosphate binding.

The protein belongs to the DMRL synthase family. As to quaternary structure, forms an icosahedral capsid composed of 60 subunits, arranged as a dodecamer of pentamers.

The catalysed reaction is (2S)-2-hydroxy-3-oxobutyl phosphate + 5-amino-6-(D-ribitylamino)uracil = 6,7-dimethyl-8-(1-D-ribityl)lumazine + phosphate + 2 H2O + H(+). It participates in cofactor biosynthesis; riboflavin biosynthesis; riboflavin from 2-hydroxy-3-oxobutyl phosphate and 5-amino-6-(D-ribitylamino)uracil: step 1/2. In terms of biological role, catalyzes the formation of 6,7-dimethyl-8-ribityllumazine by condensation of 5-amino-6-(D-ribitylamino)uracil with 3,4-dihydroxy-2-butanone 4-phosphate. This is the penultimate step in the biosynthesis of riboflavin. This Vesicomyosocius okutanii subsp. Calyptogena okutanii (strain HA) protein is 6,7-dimethyl-8-ribityllumazine synthase.